A 75-amino-acid chain; its full sequence is UPF0352 protein KPN78578_25810 (75 aa).

It belongs to the UPF0352 family.

The polypeptide is UPF0352 protein KPN78578_25810 (Klebsiella pneumoniae subsp. pneumoniae (strain ATCC 700721 / MGH 78578)).